A 90-amino-acid chain; its full sequence is FGPGCGPSTFSCTSPQKILPGSSVSFPSGYSSIYLTTESGSASVYLDRPDGFWVGGADSRGCSNFGGFNGNGDSKVGNWGDVPVAAWACN.

In terms of biological role, lectin specific for core(alpha 1-6)fucosylated N-glycans. Inhibits platelet aggregation. This chain is Hypnin-A3, found in Hypnea japonica (Japanese red alga).